Here is a 111-residue protein sequence, read N- to C-terminus: uncharacterized protein (111 aa).

In terms of domain architecture, HIT spans 4-111; it reads IFERIIEGAV…LGGGLLGSIA (108 aa). Positions 96–100 match the Histidine triad motif motif; the sequence is HLHIH.

This is an uncharacterized protein from Chlamydia trachomatis serovar D (strain ATCC VR-885 / DSM 19411 / UW-3/Cx).